The sequence spans 441 residues: Probable glycine dehydrogenase (decarboxylating) subunit 1 (441 aa).

This sequence belongs to the GcvP family. N-terminal subunit subfamily. The glycine cleavage system is composed of four proteins: P, T, L and H. In this organism, the P 'protein' is a heterodimer of two subunits.

The catalysed reaction is N(6)-[(R)-lipoyl]-L-lysyl-[glycine-cleavage complex H protein] + glycine + H(+) = N(6)-[(R)-S(8)-aminomethyldihydrolipoyl]-L-lysyl-[glycine-cleavage complex H protein] + CO2. The glycine cleavage system catalyzes the degradation of glycine. The P protein binds the alpha-amino group of glycine through its pyridoxal phosphate cofactor; CO(2) is released and the remaining methylamine moiety is then transferred to the lipoamide cofactor of the H protein. This chain is Probable glycine dehydrogenase (decarboxylating) subunit 1, found in Halobacterium salinarum (strain ATCC 700922 / JCM 11081 / NRC-1) (Halobacterium halobium).